Consider the following 292-residue polypeptide: Glutamyl-Q tRNA(Asp) synthetase (292 aa).

Residues arginine 9–serine 13 and glutamate 45 each bind L-glutamate. The 'HIGH' region signature appears at proline 12–serine 22. Positions 99, 101, 121, and 125 each coordinate Zn(2+). Residues tyrosine 184 and arginine 202 each coordinate L-glutamate. The 'KMSKS' region signature appears at lysine 240–glutamine 244. Residue lysine 243 coordinates ATP.

The protein belongs to the class-I aminoacyl-tRNA synthetase family. GluQ subfamily. It depends on Zn(2+) as a cofactor.

In terms of biological role, catalyzes the tRNA-independent activation of glutamate in presence of ATP and the subsequent transfer of glutamate onto a tRNA(Asp). Glutamate is transferred on the 2-amino-5-(4,5-dihydroxy-2-cyclopenten-1-yl) moiety of the queuosine in the wobble position of the QUC anticodon. The protein is Glutamyl-Q tRNA(Asp) synthetase of Verminephrobacter eiseniae (strain EF01-2).